We begin with the raw amino-acid sequence, 216 residues long: Octanoyltransferase (216 aa).

Residues asparagine 35 to phenylalanine 213 form the BPL/LPL catalytic domain. Substrate is bound by residues arginine 77–histidine 84, serine 144–glycine 146, and glycine 157–serine 159. Cysteine 175 functions as the Acyl-thioester intermediate in the catalytic mechanism.

It belongs to the LipB family.

Its subcellular location is the cytoplasm. The enzyme catalyses octanoyl-[ACP] + L-lysyl-[protein] = N(6)-octanoyl-L-lysyl-[protein] + holo-[ACP] + H(+). The protein operates within protein modification; protein lipoylation via endogenous pathway; protein N(6)-(lipoyl)lysine from octanoyl-[acyl-carrier-protein]: step 1/2. Catalyzes the transfer of endogenously produced octanoic acid from octanoyl-acyl-carrier-protein onto the lipoyl domains of lipoate-dependent enzymes. Lipoyl-ACP can also act as a substrate although octanoyl-ACP is likely to be the physiological substrate. The sequence is that of Octanoyltransferase from Prochlorococcus marinus (strain MIT 9312).